A 223-amino-acid polypeptide reads, in one-letter code: Cytidylate kinase (223 aa).

12–20 is an ATP binding site; the sequence is GPAGSGKST.

The protein belongs to the cytidylate kinase family. Type 1 subfamily.

It is found in the cytoplasm. The catalysed reaction is CMP + ATP = CDP + ADP. It carries out the reaction dCMP + ATP = dCDP + ADP. The protein is Cytidylate kinase of Onion yellows phytoplasma (strain OY-M).